The primary structure comprises 272 residues: Putative imidazole glycerol phosphate synthase subunit hisF2 (272 aa).

Residue Asp133 is part of the active site.

The protein belongs to the HisA/HisF family. As to quaternary structure, heterodimer of HisH and HisF.

It localises to the cytoplasm. It carries out the reaction 5-[(5-phospho-1-deoxy-D-ribulos-1-ylimino)methylamino]-1-(5-phospho-beta-D-ribosyl)imidazole-4-carboxamide + L-glutamine = D-erythro-1-(imidazol-4-yl)glycerol 3-phosphate + 5-amino-1-(5-phospho-beta-D-ribosyl)imidazole-4-carboxamide + L-glutamate + H(+). It participates in amino-acid biosynthesis; L-histidine biosynthesis; L-histidine from 5-phospho-alpha-D-ribose 1-diphosphate: step 5/9. In terms of biological role, IGPS catalyzes the conversion of PRFAR and glutamine to IGP, AICAR and glutamate. The HisF subunit catalyzes the cyclization activity that produces IGP and AICAR from PRFAR using the ammonia provided by the HisH subunit. This Vibrio vulnificus (strain YJ016) protein is Putative imidazole glycerol phosphate synthase subunit hisF2 (hisF2).